A 61-amino-acid polypeptide reads, in one-letter code: uncharacterized protein (61 aa).

This is an uncharacterized protein from Acidianus convivator (ATV).